A 468-amino-acid polypeptide reads, in one-letter code: Shaggy-related protein kinase theta (468 aa).

2 disordered regions span residues 1–53 and 91–112; these read MNVM…DQST and HANR…CGTE. Residues 134–418 form the Protein kinase domain; that stretch reads YMAQRVVGTG…ALEACAHPFF (285 aa). ATP-binding positions include 140 to 148 and lysine 163; that span reads VGTGSFGVV. Residue aspartate 259 is the Proton acceptor of the active site. A Phosphotyrosine modification is found at tyrosine 294.

It belongs to the protein kinase superfamily. CMGC Ser/Thr protein kinase family. GSK-3 subfamily. Autophosphorylated mainly on threonine and serine residues. In developing pollen.

It catalyses the reaction L-seryl-[protein] + ATP = O-phospho-L-seryl-[protein] + ADP + H(+). The catalysed reaction is L-threonyl-[protein] + ATP = O-phospho-L-threonyl-[protein] + ADP + H(+). Functionally, may mediate extracellular signals to regulate transcription in differentiating cells. This Brassica napus (Rape) protein is Shaggy-related protein kinase theta.